The following is a 159-amino-acid chain: SsrA-binding protein (159 aa).

The segment at 137–159 (KRQTEKERDWEREKQRLFQRDQR) is disordered.

This sequence belongs to the SmpB family.

Its subcellular location is the cytoplasm. Functionally, required for rescue of stalled ribosomes mediated by trans-translation. Binds to transfer-messenger RNA (tmRNA), required for stable association of tmRNA with ribosomes. tmRNA and SmpB together mimic tRNA shape, replacing the anticodon stem-loop with SmpB. tmRNA is encoded by the ssrA gene; the 2 termini fold to resemble tRNA(Ala) and it encodes a 'tag peptide', a short internal open reading frame. During trans-translation Ala-aminoacylated tmRNA acts like a tRNA, entering the A-site of stalled ribosomes, displacing the stalled mRNA. The ribosome then switches to translate the ORF on the tmRNA; the nascent peptide is terminated with the 'tag peptide' encoded by the tmRNA and targeted for degradation. The ribosome is freed to recommence translation, which seems to be the essential function of trans-translation. This is SsrA-binding protein from Cellvibrio japonicus (strain Ueda107) (Pseudomonas fluorescens subsp. cellulosa).